The chain runs to 552 residues: Dihydroxy-acid dehydratase (552 aa).

Position 46 (C46) interacts with [2Fe-2S] cluster. D78 provides a ligand contact to Mg(2+). C119 contacts [2Fe-2S] cluster. Residues D120 and K121 each coordinate Mg(2+). K121 carries the N6-carboxylysine modification. C191 provides a ligand contact to [2Fe-2S] cluster. E442 serves as a coordination point for Mg(2+). The active-site Proton acceptor is S468.

The protein belongs to the IlvD/Edd family. As to quaternary structure, homodimer. Requires [2Fe-2S] cluster as cofactor. The cofactor is Mg(2+).

It carries out the reaction (2R)-2,3-dihydroxy-3-methylbutanoate = 3-methyl-2-oxobutanoate + H2O. The enzyme catalyses (2R,3R)-2,3-dihydroxy-3-methylpentanoate = (S)-3-methyl-2-oxopentanoate + H2O. The protein operates within amino-acid biosynthesis; L-isoleucine biosynthesis; L-isoleucine from 2-oxobutanoate: step 3/4. It participates in amino-acid biosynthesis; L-valine biosynthesis; L-valine from pyruvate: step 3/4. Its function is as follows. Functions in the biosynthesis of branched-chain amino acids. Catalyzes the dehydration of (2R,3R)-2,3-dihydroxy-3-methylpentanoate (2,3-dihydroxy-3-methylvalerate) into 2-oxo-3-methylpentanoate (2-oxo-3-methylvalerate) and of (2R)-2,3-dihydroxy-3-methylbutanoate (2,3-dihydroxyisovalerate) into 2-oxo-3-methylbutanoate (2-oxoisovalerate), the penultimate precursor to L-isoleucine and L-valine, respectively. In Picrophilus torridus (strain ATCC 700027 / DSM 9790 / JCM 10055 / NBRC 100828 / KAW 2/3), this protein is Dihydroxy-acid dehydratase.